We begin with the raw amino-acid sequence, 314 residues long: MATEMDKIFLTLATVEFIIGMLGNVFIGLVNCSEGIKNQKVFSVDFILTCLAISTIGHLLVILFDSCVVGLAPHLYATDRVRRPVTMLWHMXNHLTTWLATCLSIFYFFKIAHFPHSLFLWLRWRMNRVIAILLTLSLFLLIFDCLVLEMFIDXSLNIIDKSNLTLYLDESKTPYDKLSLLKILLSLNSFIPFSLCLTSLLFLFLSLVRHTRNLKLSSLGSRDSSTEAHRRAMKMVMSLLFLFIVHFFSLQVANWTFCILGNNKYTQFVTLALHAFPSCHSFILILGNSKLRQTAVRLLWHLRNYTKRPNPLPL.

Residues 1-7 (MATEMDK) are Extracellular-facing. A helical membrane pass occupies residues 8-28 (IFLTLATVEFIIGMLGNVFIG). At 29–50 (LVNCSEGIKNQKVFSVDFILTC) the chain is on the cytoplasmic side. The helical transmembrane segment at 51 to 71 (LAISTIGHLLVILFDSCVVGL) threads the bilayer. The Extracellular segment spans residues 72–101 (APHLYATDRVRRPVTMLWHMXNHLTTWLAT). Residues 102–122 (CLSIFYFFKIAHFPHSLFLWL) form a helical membrane-spanning segment. Topologically, residues 123-127 (RWRMN) are cytoplasmic. The chain crosses the membrane as a helical span at residues 128–148 (RVIAILLTLSLFLLIFDCLVL). Residues 149–187 (EMFIDXSLNIIDKSNLTLYLDESKTPYDKLSLLKILLSL) are Extracellular-facing. The N-linked (GlcNAc...) asparagine glycan is linked to N163. A helical transmembrane segment spans residues 188–208 (NSFIPFSLCLTSLLFLFLSLV). Residues 209–238 (RHTRNLKLSSLGSRDSSTEAHRRAMKMVMS) lie on the Cytoplasmic side of the membrane. Residues 239–259 (LLFLFIVHFFSLQVANWTFCI) form a helical membrane-spanning segment. Residues 260–265 (LGNNKY) are Extracellular-facing. The helical transmembrane segment at 266–286 (TQFVTLALHAFPSCHSFILIL) threads the bilayer. The Cytoplasmic portion of the chain corresponds to 287–314 (GNSKLRQTAVRLLWHLRNYTKRPNPLPL).

The protein belongs to the G-protein coupled receptor T2R family.

The protein localises to the membrane. Receptor that may play a role in the perception of bitterness and is gustducin-linked. May play a role in sensing the chemical composition of the gastrointestinal content. The activity of this receptor may stimulate alpha gustducin, mediate PLC-beta-2 activation and lead to the gating of TRPM5. The polypeptide is Taste receptor type 2 member 42 (TAS2R42) (Macaca mulatta (Rhesus macaque)).